We begin with the raw amino-acid sequence, 340 residues long: Uroporphyrinogen decarboxylase (340 aa).

Residues 21-25 (RQAGR), D71, Y148, S203, and H316 contribute to the substrate site.

This sequence belongs to the uroporphyrinogen decarboxylase family. Homodimer.

The protein localises to the cytoplasm. The catalysed reaction is uroporphyrinogen III + 4 H(+) = coproporphyrinogen III + 4 CO2. It participates in porphyrin-containing compound metabolism; protoporphyrin-IX biosynthesis; coproporphyrinogen-III from 5-aminolevulinate: step 4/4. In terms of biological role, catalyzes the decarboxylation of four acetate groups of uroporphyrinogen-III to yield coproporphyrinogen-III. This Campylobacter jejuni subsp. jejuni serotype O:23/36 (strain 81-176) protein is Uroporphyrinogen decarboxylase.